A 631-amino-acid polypeptide reads, in one-letter code: Integrator complex subunit 10 (631 aa).

Polar residues predominate over residues 545 to 570 (FELTSSPNSSGTPTATTVAGGSQSRR). Positions 545–577 (FELTSSPNSSGTPTATTVAGGSQSRRIGTRGAD) are disordered.

This sequence belongs to the Integrator subunit 10 family. In terms of assembly, belongs to the multiprotein complex Integrator, at least composed of IntS1, IntS2, IntS3, IntS4, omd/IntS5, IntS6, defl/IntS7, IntS8, IntS9, IntS10, IntS11, IntS12, asun/IntS13, IntS14 and IntS15. The core complex associates with protein phosphatase 2A subunits mts/PP2A and Pp2A-29B, to form the Integrator-PP2A (INTAC) complex.

It localises to the nucleus. Component of the integrator complex, a multiprotein complex that terminates RNA polymerase II (Pol II) transcription in the promoter-proximal region of genes. The integrator complex provides a quality checkpoint during transcription elongation by driving premature transcription termination of transcripts that are unfavorably configured for transcriptional elongation: the complex terminates transcription by (1) catalyzing dephosphorylation of the C-terminal domain (CTD) of Pol II subunit Polr2A/Rbp1 and Spt5, and (2) degrading the exiting nascent RNA transcript via endonuclease activity. The integrator complex is also involved in the 3'-end processing of the U7 snRNA, and also the spliceosomal snRNAs U1, U2, U4 and U5. This Drosophila melanogaster (Fruit fly) protein is Integrator complex subunit 10.